A 977-amino-acid polypeptide reads, in one-letter code: Dynamin-like GTPase OPA1, mitochondrial (977 aa).

Residues 1 to 86 constitute a mitochondrion transit peptide; it reads MWRTKAAAAC…VKYGYQSYRN (86 aa). The Mitochondrial matrix portion of the chain corresponds to 87–95; it reads FWLARLASR. A helical membrane pass occupies residues 96–112; it reads LLKIRYLILGSAVGGGY. The Mitochondrial intermembrane portion of the chain corresponds to 113 to 787; sequence TAKKTYDQWE…SVIEDMVGPD (675 aa). Residues 224–271 adopt a coiled-coil conformation; the sequence is KKVSDKEKIDQLQEELLRTQLKYQRMLERLEKENKELRKLVLQRDDKG. Positions 302–578 constitute a Dynamin-type G domain; the sequence is QDHLPRVVVV…FWKMVRESVE (277 aa). Positions 312–319 are G1 motif; it reads GDQSAGKT. Residues S315, G317, K318, T319, S320, and G334 each coordinate GTP. Residue T319 coordinates Mg(2+). Residues 338-341 are G2 motif; sequence MMTR. The Mg(2+) site is built by T340 and D415. The G3 motif stretch occupies residues 415 to 418; that stretch reads DLPG. The tract at residues 484–487 is G4 motif; that stretch reads TKVD. The GTP site is built by K485, D487, and T520. The G5 motif stretch occupies residues 518–521; that stretch reads VVTG. Stalk region regions lie at residues 606–853 and 891–945; these read DRNE…IKDT and CNDI…VKLL. Residues 753–873 form a paddle region region; that stretch reads SDKQQWDAAI…KTALNHCNLC (121 aa). The stretch at 788 to 798 is an intramembrane region; sequence WKKRWLYWISR. Residues 799–977 are Mitochondrial intermembrane-facing; that stretch reads TKEQNIRNET…AFIEALHQEK (179 aa). C873 and C891 are disulfide-bonded. The stretch at 911 to 977 forms a coiled coil; sequence LRQQLTNTEV…AFIEALHQEK (67 aa).

The protein belongs to the TRAFAC class dynamin-like GTPase superfamily. Dynamin/Fzo/YdjA family. As to quaternary structure, oligomeric complex consisting of membrane-bound and soluble forms of OPA1. Cleaved by OMA1 or YME1L downstream of the transmembrane region in response to different signals to generate soluble forms. Cleaved by OMA1 at position S1 following stress conditions, generating the short soluble form (Dynamin-like GTPase OPA1, short form; S-OPA1).

The protein resides in the mitochondrion inner membrane. Its subcellular location is the mitochondrion intermembrane space. The catalysed reaction is GTP + H2O = GDP + phosphate + H(+). Its function is as follows. Dynamin-related GTPase that is essential for normal mitochondrial morphology by mediating fusion of the mitochondrial inner membranes, regulating cristae morphology and maintaining respiratory chain function. Exists in two forms: the transmembrane, long form (Dynamin-like GTPase OPA1, long form; L-OPA1), which is tethered to the inner mitochondrial membrane, and the short soluble form (Dynamin-like GTPase OPA1, short form; S-OPA1), which results from proteolytic cleavage and localizes in the intermembrane space. Both forms (L-OPA1 and S-OPA1) cooperate to catalyze the fusion of the mitochondrial inner membrane. The equilibrium between L-OPA1 and S-OPA1 is essential: excess levels of S-OPA1, produced by cleavage by OMA1 following loss of mitochondrial membrane potential, lead to an impaired equilibrium between L-OPA1 and S-OPA1, inhibiting mitochondrial fusion. The balance between L-OPA1 and S-OPA1 also influences cristae shape and morphology. Its role in mitochondrial morphology is required for mitochondrial genome maintenance. Constitutes the transmembrane long form (L-OPA1) that plays a central role in mitochondrial inner membrane fusion and cristae morphology. L-OPA1 and the soluble short form (S-OPA1) form higher-order helical assemblies that coordinate the fusion of mitochondrial inner membranes. Inner membrane-anchored L-OPA1 molecules initiate membrane remodeling by recruiting soluble S-OPA1 to rapidly polymerize into a flexible cylindrical scaffold encaging the mitochondrial inner membrane. Once at the membrane surface, the formation of S-OPA1 helices induce bilayer curvature. OPA1 dimerization through the paddle region, which inserts into cardiolipin-containing membrane, promotes GTP hydrolysis and the helical assembly of a flexible OPA1 lattice on the membrane, which drives membrane curvature and mitochondrial fusion. Plays a role in the maintenance and remodeling of mitochondrial cristae, some invaginations of the mitochondrial inner membrane that provide an increase in the surface area. Probably acts by forming helical filaments at the inside of inner membrane tubes with the shape and dimensions of crista junctions. Functionally, constitutes the soluble short form (S-OPA1) generated by cleavage by OMA1, which plays a central role in mitochondrial inner membrane fusion and cristae morphology. The transmembrane long form (L-OPA1) and the S-OPA1 form higher-order helical assemblies that coordinate the fusion of mitochondrial inner membranes. Inner membrane-anchored L-OPA1 molecules initiate membrane remodeling by recruiting soluble S-OPA1 to rapidly polymerize into a flexible cylindrical scaffold encaging the mitochondrial inner membrane. Once at the membrane surface, the formation of S-OPA1 helices induce bilayer curvature. OPA1 dimerization through the paddle region, which inserts into cardiolipin-containing membrane, promotes GTP hydrolysis and the helical assembly of a flexible OPA1 lattice on the membrane, which drives membrane curvature and mitochondrial fusion. Excess levels of S-OPA1 produced by cleavage by OMA1 following stress conditions that induce loss of mitochondrial membrane potential, lead to an impaired equilibrium between L-OPA1 and S-OPA1, thereby inhibiting mitochondrial fusion. Plays a role in the maintenance and remodeling of mitochondrial cristae, some invaginations of the mitochondrial inner membrane that provide an increase in the surface area. Probably acts by forming helical filaments at the inside of inner membrane tubes with the shape and dimensions of crista junctions. The protein is Dynamin-like GTPase OPA1, mitochondrial of Gallus gallus (Chicken).